The chain runs to 227 residues: Large ribosomal subunit protein uL3 (227 aa).

Gln-158 is subject to N5-methylglutamine.

The protein belongs to the universal ribosomal protein uL3 family. Part of the 50S ribosomal subunit. Forms a cluster with proteins L14 and L19. In terms of processing, methylated by PrmB.

In terms of biological role, one of the primary rRNA binding proteins, it binds directly near the 3'-end of the 23S rRNA, where it nucleates assembly of the 50S subunit. The protein is Large ribosomal subunit protein uL3 of Polaromonas sp. (strain JS666 / ATCC BAA-500).